The primary structure comprises 633 residues: Probable potassium transport system protein Kup 2 (633 aa).

The next 12 helical transmembrane spans lie at 18–38 (FLAL…TSPL), 61–81 (LVSL…VLFL), 107–127 (PVLM…DAMI), 143–163 (VAPA…LLLF), 173–193 (VSVF…AAGV), 211–231 (AIGF…AIFL), 255–275 (WFAV…ALVL), 287–307 (LMFP…ATII), 345–365 (IYLP…MLMF), 371–391 (LAPA…ILAF), 402–422 (ALTA…FLGA), and 427–447 (VHHG…MMWT).

Belongs to the HAK/KUP transporter (TC 2.A.72) family.

It is found in the cell inner membrane. The catalysed reaction is K(+)(in) + H(+)(in) = K(+)(out) + H(+)(out). In terms of biological role, transport of potassium into the cell. Likely operates as a K(+):H(+) symporter. The protein is Probable potassium transport system protein Kup 2 of Rhizobium meliloti (strain 1021) (Ensifer meliloti).